A 390-amino-acid polypeptide reads, in one-letter code: MALYRAPKLQRSLLNRCLATASTTPAAASTSRTSTFRKTLEEGPTLDDFIAGDVPNNRVVLGNTSAPRLPSYLKTSIPTGASFSKIKKDLRGLNLHTVCEEARCPNIGDCWGGKPGATEAEGRSAATATIMLMGDTCTRGCRFCSVKTSRTPPPLDPHEPENTAEAISRWGLGYIVLTSVDRDDLADGGARHFAETISKIKQKAPHILVEALTGDFAGNLEHVSLVAKSGLDVYAHNIETVEALTPFVRDRRATFRQSLSVLKRAKEEGVKVTKTSIMLGVGETEDQVLDALKELRKVDVDVVTFGQYMRPTKRHMKVDRYVEPAEFDRWKQVAEDLGFLYVASGPLVRSSYKAGEFYIENVLKGKSVNKRVKNLTMESELSEKSASASL.

The N-terminal 18 residues, Met-1–Leu-18, are a transit peptide targeting the mitochondrion. Residues Cys-99, Cys-104, Cys-110, Cys-137, Cys-141, Cys-144, and Ser-351 each contribute to the [4Fe-4S] cluster site. The 221-residue stretch at Ala-120–Leu-340 folds into the Radical SAM core domain.

Belongs to the radical SAM superfamily. Lipoyl synthase family. The cofactor is [4Fe-4S] cluster.

The protein localises to the mitochondrion. The catalysed reaction is [[Fe-S] cluster scaffold protein carrying a second [4Fe-4S](2+) cluster] + N(6)-octanoyl-L-lysyl-[protein] + 2 oxidized [2Fe-2S]-[ferredoxin] + 2 S-adenosyl-L-methionine + 4 H(+) = [[Fe-S] cluster scaffold protein] + N(6)-[(R)-dihydrolipoyl]-L-lysyl-[protein] + 4 Fe(3+) + 2 hydrogen sulfide + 2 5'-deoxyadenosine + 2 L-methionine + 2 reduced [2Fe-2S]-[ferredoxin]. It participates in protein modification; protein lipoylation via endogenous pathway; protein N(6)-(lipoyl)lysine from octanoyl-[acyl-carrier-protein]: step 2/2. Its function is as follows. Catalyzes the radical-mediated insertion of two sulfur atoms into the C-6 and C-8 positions of the octanoyl moiety bound to the lipoyl domains of lipoate-dependent enzymes, thereby converting the octanoylated domains into lipoylated derivatives. This Coprinopsis cinerea (strain Okayama-7 / 130 / ATCC MYA-4618 / FGSC 9003) (Inky cap fungus) protein is Lipoyl synthase, mitochondrial.